The following is a 376-amino-acid chain: MRLTIAGDSHGKYMIAVLEGIPAGLKIDEEIIRRELFRRRNCYGRGKRMSMEEDAFEIVSGVWGGITTGAPVTILVPNKAGNPVKDVRSVPRPGHIDYAAFVKYKLPDLNVYVERSSARWTVALTAAGALLKSLLREFNIDVLGFVTRLGNVEAKNIPDNFEELRRKRDESAVFCPDPEATEGMISEIDRAKEEGNTLGGKVKVIARGVPAGIGSYSDLFKKLDSKIGSLFFAIPAVKGVVIGSEEMWYGFDYLDEFELEDGRIKRRTNNLGGIEGGITNGEDVWVNVFVKPIPTTGKPLNSVDLRTMEPAKTPYVRSDVTAVPPASVVCEAALAVVISDALLEHLGDGNIDDLKRRFGNENLPRWDDGFWKEYDR.

Arg39 and Arg45 together coordinate NADP(+). FMN is bound by residues Arg115 to Ser117, Gly276, Lys291 to Thr295, and Arg317.

The protein belongs to the chorismate synthase family. As to quaternary structure, homotetramer. Requires FMNH2 as cofactor.

It carries out the reaction 5-O-(1-carboxyvinyl)-3-phosphoshikimate = chorismate + phosphate. Its pathway is metabolic intermediate biosynthesis; chorismate biosynthesis; chorismate from D-erythrose 4-phosphate and phosphoenolpyruvate: step 7/7. Catalyzes the anti-1,4-elimination of the C-3 phosphate and the C-6 proR hydrogen from 5-enolpyruvylshikimate-3-phosphate (EPSP) to yield chorismate, which is the branch point compound that serves as the starting substrate for the three terminal pathways of aromatic amino acid biosynthesis. This reaction introduces a second double bond into the aromatic ring system. This Thermotoga sp. (strain RQ2) protein is Chorismate synthase.